Consider the following 340-residue polypeptide: MTLVGNFSPLVLVGDSDRVEAETVGAYLDGWAGHDKVRLATANAIKAILSGAGRLVGSIARGYLPGDPGKLVGVNSDQDQQKSIDVGSHNLFVELLIAAGVASILSEEADLPVAGKADGLVAVAIDPLDGSGNVGLGAPLGTIFSIFPADVEEPFLQPGNRQIAAGYVSYGNSVDLGFSVGEGVIFATLDPVSGQFHITRRNVKLPERTSDLAFNASVQRHLSAGMQAYVNDAFLGKDGPRGRNFNMRWLGAAVGDMHRIMQRGGLFFYVNDSRPGYEKGRLRLVYEANPIAFLAREAGGKATDGSRPILDIVPQTYHERSALVFGVAEELDILGEYFVK.

Mg(2+) contacts are provided by Glu107, Asp126, Leu128, and Asp129. Asn215 is a binding site for substrate. Residue Glu287 coordinates Mg(2+).

This sequence belongs to the FBPase class 1 family. In terms of assembly, homotetramer. Requires Mg(2+) as cofactor.

It is found in the cytoplasm. The catalysed reaction is beta-D-fructose 1,6-bisphosphate + H2O = beta-D-fructose 6-phosphate + phosphate. It participates in carbohydrate biosynthesis; gluconeogenesis. This Brucella canis (strain ATCC 23365 / NCTC 10854 / RM-666) protein is Fructose-1,6-bisphosphatase class 1.